We begin with the raw amino-acid sequence, 232 residues long: Orotidine 5'-phosphate decarboxylase (232 aa).

Residues Asp11, Lys33, 60–69 (DLKFHDIPNT), Thr120, Arg181, Gln190, Gly210, and Arg211 each bind substrate. Residue Lys62 is the Proton donor of the active site.

This sequence belongs to the OMP decarboxylase family. Type 1 subfamily. Homodimer.

The enzyme catalyses orotidine 5'-phosphate + H(+) = UMP + CO2. It participates in pyrimidine metabolism; UMP biosynthesis via de novo pathway; UMP from orotate: step 2/2. Functionally, catalyzes the decarboxylation of orotidine 5'-monophosphate (OMP) to uridine 5'-monophosphate (UMP). In Vibrio vulnificus (strain YJ016), this protein is Orotidine 5'-phosphate decarboxylase.